The sequence spans 494 residues: Glycerol kinase (494 aa).

Residue T13 participates in ADP binding. Residues T13, T14, and S15 each contribute to the ATP site. Sn-glycerol 3-phosphate is bound at residue T13. Residue R17 participates in ADP binding. The sn-glycerol 3-phosphate site is built by R83, E84, Y135, and D244. The glycerol site is built by R83, E84, Y135, D244, and Q245. Residues T266 and G309 each coordinate ADP. T266, G309, Q313, and G410 together coordinate ATP. 2 residues coordinate ADP: G410 and N414.

This sequence belongs to the FGGY kinase family.

The enzyme catalyses glycerol + ATP = sn-glycerol 3-phosphate + ADP + H(+). It participates in polyol metabolism; glycerol degradation via glycerol kinase pathway; sn-glycerol 3-phosphate from glycerol: step 1/1. Its activity is regulated as follows. Inhibited by fructose 1,6-bisphosphate (FBP). Key enzyme in the regulation of glycerol uptake and metabolism. Catalyzes the phosphorylation of glycerol to yield sn-glycerol 3-phosphate. This Shewanella putrefaciens (strain CN-32 / ATCC BAA-453) protein is Glycerol kinase.